Reading from the N-terminus, the 507-residue chain is ATP synthase subunit alpha (507 aa).

170 to 177 (GDRQTGKT) is an ATP binding site.

This sequence belongs to the ATPase alpha/beta chains family. In terms of assembly, F-type ATPases have 2 components, CF(1) - the catalytic core - and CF(0) - the membrane proton channel. CF(1) has five subunits: alpha(3), beta(3), gamma(1), delta(1), epsilon(1). CF(0) has three main subunits: a(1), b(2) and c(9-12). The alpha and beta chains form an alternating ring which encloses part of the gamma chain. CF(1) is attached to CF(0) by a central stalk formed by the gamma and epsilon chains, while a peripheral stalk is formed by the delta and b chains.

The protein resides in the cell inner membrane. It catalyses the reaction ATP + H2O + 4 H(+)(in) = ADP + phosphate + 5 H(+)(out). Produces ATP from ADP in the presence of a proton gradient across the membrane. The alpha chain is a regulatory subunit. In Fervidobacterium nodosum (strain ATCC 35602 / DSM 5306 / Rt17-B1), this protein is ATP synthase subunit alpha.